A 305-amino-acid polypeptide reads, in one-letter code: Ferrochelatase (305 aa).

Fe cation-binding residues include H182 and E262.

The protein belongs to the ferrochelatase family.

The protein resides in the cytoplasm. The catalysed reaction is heme b + 2 H(+) = protoporphyrin IX + Fe(2+). Its pathway is porphyrin-containing compound metabolism; protoheme biosynthesis; protoheme from protoporphyrin-IX: step 1/1. In terms of biological role, catalyzes the ferrous insertion into protoporphyrin IX. This chain is Ferrochelatase, found in Herpetosiphon aurantiacus (strain ATCC 23779 / DSM 785 / 114-95).